A 250-amino-acid polypeptide reads, in one-letter code: UPF0736 protein BPUM_1067 (250 aa).

Belongs to the UPF0736 family.

This is UPF0736 protein BPUM_1067 from Bacillus pumilus (strain SAFR-032).